Consider the following 476-residue polypeptide: Adenosylhomocysteinase (476 aa).

Substrate-binding residues include Thr65, Asp140, and Glu201. An NAD(+)-binding site is contributed by 202 to 204; the sequence is TTT. The substrate site is built by Lys231 and Asp235. NAD(+)-binding positions include Asn236, 265–270, Glu288, Asn323, 344–346, and Asn392; these read GYGDVG and IGH.

It belongs to the adenosylhomocysteinase family. It depends on NAD(+) as a cofactor.

Its subcellular location is the cytoplasm. It catalyses the reaction S-adenosyl-L-homocysteine + H2O = L-homocysteine + adenosine. The protein operates within amino-acid biosynthesis; L-homocysteine biosynthesis; L-homocysteine from S-adenosyl-L-homocysteine: step 1/1. Its function is as follows. May play a key role in the regulation of the intracellular concentration of adenosylhomocysteine. This Bacteroides thetaiotaomicron (strain ATCC 29148 / DSM 2079 / JCM 5827 / CCUG 10774 / NCTC 10582 / VPI-5482 / E50) protein is Adenosylhomocysteinase.